Here is a 201-residue protein sequence, read N- to C-terminus: Small ribosomal subunit protein uS4c (201 aa).

Residues 89–150 form the S4 RNA-binding domain; it reads MRLDNILFRL…KERSKALIQN (62 aa).

This sequence belongs to the universal ribosomal protein uS4 family. As to quaternary structure, part of the 30S ribosomal subunit. Contacts protein S5. The interaction surface between S4 and S5 is involved in control of translational fidelity.

Its subcellular location is the plastid. It localises to the chloroplast. One of the primary rRNA binding proteins, it binds directly to 16S rRNA where it nucleates assembly of the body of the 30S subunit. Functionally, with S5 and S12 plays an important role in translational accuracy. The polypeptide is Small ribosomal subunit protein uS4c (rps4) (Phalaenopsis aphrodite subsp. formosana (Moth orchid)).